The following is a 483-amino-acid chain: Cysteine--tRNA ligase (483 aa).

Cysteine 27 provides a ligand contact to Zn(2+). Residues 29–39 carry the 'HIGH' region motif; it reads ITAYDYCHIGH. Zn(2+) is bound by residues cysteine 208, histidine 231, and glutamate 235. The short motif at 263–267 is the 'KMSKS' region element; sequence KMSKS. ATP is bound at residue lysine 266.

Belongs to the class-I aminoacyl-tRNA synthetase family. In terms of assembly, monomer. The cofactor is Zn(2+).

It localises to the cytoplasm. It catalyses the reaction tRNA(Cys) + L-cysteine + ATP = L-cysteinyl-tRNA(Cys) + AMP + diphosphate. This Desulfovibrio desulfuricans (strain ATCC 27774 / DSM 6949 / MB) protein is Cysteine--tRNA ligase.